Consider the following 199-residue polypeptide: Acireductone dioxygenase 1 (199 aa).

Fe(2+)-binding residues include His99, His101, Glu105, and His144. Ni(2+)-binding residues include His99, His101, Glu105, and His144.

This sequence belongs to the acireductone dioxygenase (ARD) family. Fe(2+) is required as a cofactor. Requires Ni(2+) as cofactor.

Its subcellular location is the cytoplasm. It is found in the nucleus. It catalyses the reaction 1,2-dihydroxy-5-(methylsulfanyl)pent-1-en-3-one + O2 = 4-methylsulfanyl-2-oxobutanoate + formate + 2 H(+). It carries out the reaction 1,2-dihydroxy-5-(methylsulfanyl)pent-1-en-3-one + O2 = 3-(methylsulfanyl)propanoate + CO + formate + 2 H(+). It participates in amino-acid biosynthesis; L-methionine biosynthesis via salvage pathway; L-methionine from S-methyl-5-thio-alpha-D-ribose 1-phosphate: step 5/6. Functionally, catalyzes 2 different reactions between oxygen and the acireductone 1,2-dihydroxy-3-keto-5-methylthiopentene (DHK-MTPene) depending upon the metal bound in the active site. Fe-containing acireductone dioxygenase (Fe-ARD) produces formate and 2-keto-4-methylthiobutyrate (KMTB), the alpha-ketoacid precursor of methionine in the methionine recycle pathway. Ni-containing acireductone dioxygenase (Ni-ARD) produces methylthiopropionate, carbon monoxide and formate, and does not lie on the methionine recycle pathway. This is Acireductone dioxygenase 1 (ARD1) from Oryza sativa subsp. indica (Rice).